We begin with the raw amino-acid sequence, 3411 residues long: Genome polyprotein (3411 aa).

The Cytoplasmic segment spans residues 1-104; that stretch reads MSGRKAQGKT…LSSRKRRSHD (104 aa). Positions 102-121 are cleaved as a propeptide — ER anchor for the capsid protein C, removed in mature form by serine protease NS3; sequence SHDALAVQFLILGMLLMAGG. A helical transmembrane segment spans residues 105-125; the sequence is ALAVQFLILGMLLMAGGVTLV. Residues 126-244 are Extracellular-facing; that stretch reads RKNRWLLLNV…GERQLQKIER (119 aa). 2 N-linked (GlcNAc...) asparagine; by host glycosylation sites follow: asparagine 134 and asparagine 150. Residues 245–265 form a helical membrane-spanning segment; sequence WLVRNPFFAVTALTIAYLVGS. The Cytoplasmic segment spans residues 266-270; it reads NMTQR. The helical transmembrane segment at 271–285 threads the bilayer; it reads VVIALLVLAVGPAYS. Residues 286–730 are Extracellular-facing; the sequence is AHCIGITDRD…TVFGSAFQGL (445 aa). 8 disulfide bridges follow: cysteine 288/cysteine 315, cysteine 345/cysteine 401, cysteine 345/cysteine 406, cysteine 359/cysteine 390, cysteine 377/cysteine 401, cysteine 377/cysteine 406, cysteine 467/cysteine 568, and cysteine 585/cysteine 615. Residues 383 to 396 form a fusion peptide region; sequence DRGWGNGCGLFGKG. A helical membrane pass occupies residues 731-751; sequence FGGLSWITKVIMGAVLIWVGI. Over 752–757 the chain is Extracellular; it reads NTRNMT. Residues 758-778 traverse the membrane as a helical segment; that stretch reads MSMSMILVGVIMMFLSLGVGA. Topologically, residues 779–1132 are extracellular; sequence DQGCAINFGK…LVRSWVTAGE (354 aa). Cystine bridges form between cysteine 782–cysteine 793, cysteine 833–cysteine 921, cysteine 957–cysteine 1002, cysteine 1058–cysteine 1107, cysteine 1069–cysteine 1091, and cysteine 1090–cysteine 1094. Asparagine 908 and asparagine 986 each carry an N-linked (GlcNAc...) asparagine; by host glycan. Residues 1133–1153 traverse the membrane as a helical segment; that stretch reads IHAVPFGLVSMMIAMEVVLRK. The Cytoplasmic segment spans residues 1154-1201; the sequence is RQGPKQMLVGGVVLLGAMLVGQVTLLDLLKLTVAVGLHFHEMNNGGDA. A helical transmembrane segment spans residues 1202–1222; that stretch reads MYMALIAAFSIRPGLLIGFGL. Topologically, residues 1223–1287 are lumenal; sequence RTLWSPRERL…ILPLMALLTP (65 aa). The helical transmembrane segment at 1288–1308 threads the bilayer; sequence VTMAEVRLAAMLFCTVVIIGV. Residues 1309-1355 are Cytoplasmic-facing; it reads LHQNSKDTSMQKTIPLVALTLTSYLGLTQPFLGLCAFLATRLFGRRS. Residues 1356–1376 traverse the membrane as a helical segment; sequence IPVNEALAAAGLVGVLAGLAF. Residues 1377 to 1378 lie on the Lumenal side of the membrane; it reads QE. A helical membrane pass occupies residues 1379 to 1399; that stretch reads MENFLGPIAVGGILMMLVSVA. Residues 1400-1456 lie on the Cytoplasmic side of the membrane; that stretch reads GRVDGLELRKLGEVSWEEEAEISGSSARYDVALSEQGEFKLLSEEKVPWDQVVMTSL. The interval 1407-1446 is interacts with and activates NS3 protease; sequence LRKLGEVSWEEEAEISGSSARYDVALSEQGEFKLLSEEKV. The helical intramembrane region spans 1457-1477; sequence ALVGAAIHPFALLLVLAGWLF. Over 1478–2157 the chain is Cytoplasmic; the sequence is HVKGARRSGD…RNALSMMPEA (680 aa). Positions 1485 to 1665 constitute a Peptidase S7 domain; that stretch reads SGDVLWDIPT…EVKEEGKEEL (181 aa). Residues histidine 1537, aspartate 1561, and serine 1622 each act as charge relay system; for serine protease NS3 activity in the active site. The 157-residue stretch at 1669 to 1825 folds into the Helicase ATP-binding domain; sequence PTMLKKGMTT…HSNGEIEDVQ (157 aa). The segment at 1673–1676 is important for RNA-binding; sequence KKGM. 1682-1689 contributes to the ATP binding site; that stretch reads FHPGAGKT. The short motif at 1773–1776 is the DEAH box element; it reads DEAH. In terms of domain architecture, Helicase C-terminal spans 1820 to 1997; it reads EIEDVQTDIP…VRGGMVAPLY (178 aa). At lysine 1877 the chain carries N6-acetyllysine; by host. Positions 1942–1961 are disordered; sequence AAQRRGRIGRNPNRDGDSYY. The chain crosses the membrane as a helical span at residues 2158–2178; the sequence is MTIAMLFILAGLLTSGMVIFF. Over 2179–2186 the chain is Lumenal; the sequence is MSPKGISR. An intramembrane region (helical) is located at residues 2187–2207; it reads MSMAMGTMAGCGYLMFLGGVK. The Lumenal segment spans residues 2208 to 2209; it reads PT. Residues 2210 to 2230 traverse the membrane as a helical segment; it reads HISYIMLIFFVLMVVVIPEPG. Residues 2231–2241 are Cytoplasmic-facing; the sequence is QQRSIQDNQVA. The helical transmembrane segment at 2242-2262 threads the bilayer; it reads YLIIGILTLVSVVAANELGML. The Lumenal segment spans residues 2263–2293; the sequence is EKTKEDLFGKKDLIPSSASPWSWPDLDLKPG. The segment at residues 2294 to 2314 is an intramembrane region (helical); it reads AAWTVYVGIVTMLSPMLHHWI. The Lumenal segment spans residues 2315–2360; it reads KVEYGNLSLSGIAQSASVLSFMDKGIPFMKMNISVIILLVSGWNSI. Residues 2361–2380 form a helical membrane-spanning segment; it reads TVMPLLCGIGCAMLHWSLIL. At 2381–2421 the chain is on the cytoplasmic side; it reads PGIKAQQSKLAQRRVFHGVAKNPVVDGNPTVDIEEAPEMPA. Residues 2422-2442 traverse the membrane as a helical segment; the sequence is LYEKKLALYLLLALSLASVAM. Over 2443 to 2445 the chain is Lumenal; that stretch reads CRT. A helical transmembrane segment spans residues 2446–2466; it reads PFSLAEGIVLASAALGPLIEG. Residues 2467–3411 are Cytoplasmic-facing; that stretch reads NTSLLWNGPM…DADLQPGELI (945 aa). An mRNA cap 0-1 NS5-type MT domain is found at 2507–2771; sequence GRANGKTLGE…DVILPIGTRS (265 aa). Position 2562 (serine 2562) interacts with S-adenosyl-L-methionine. Serine 2562 carries the post-translational modification Phosphoserine. Lysine 2567 acts as the For 2'-O-MTase activity in catalysis. S-adenosyl-L-methionine contacts are provided by glycine 2592, tryptophan 2593, threonine 2610, leucine 2611, aspartate 2637, and isoleucine 2638. Aspartate 2652 functions as the For 2'-O-MTase activity in the catalytic mechanism. Isoleucine 2653 provides a ligand contact to S-adenosyl-L-methionine. Residues lysine 2688 and glutamate 2724 each act as for 2'-O-MTase activity in the active site. Tyrosine 2726 provides a ligand contact to S-adenosyl-L-methionine. A Nuclear localization signal motif is present at residues 2878–2911; that stretch reads RKIMKVVNRWLFRHLAREKNPRLCTKEEFIAKVR. The Zn(2+) site is built by glutamate 2945, histidine 2949, cysteine 2954, and cysteine 2957. The RdRp catalytic domain occupies 3035-3187; that stretch reads GGFYADDTAG…RPIDDRFGLA (153 aa). Histidine 3222, cysteine 3238, and cysteine 3357 together coordinate Zn(2+).

This sequence in the N-terminal section; belongs to the class I-like SAM-binding methyltransferase superfamily. mRNA cap 0-1 NS5-type methyltransferase family. As to quaternary structure, homodimer. Interacts (via N-terminus) with host EXOC1 (via C-terminus); this interaction results in EXOC1 degradation through the proteasome degradation pathway. In terms of assembly, forms heterodimers with envelope protein E in the endoplasmic reticulum and Golgi. Homodimer; in the endoplasmic reticulum and Golgi. Interacts with protein prM. Interacts with non-structural protein 1. As to quaternary structure, homodimer; Homohexamer when secreted. Interacts with envelope protein E. In terms of assembly, interacts (via N-terminus) with serine protease NS3. Forms a heterodimer with serine protease NS3. May form homooligomers. As to quaternary structure, forms a heterodimer with NS2B. Interacts with non-structural protein 2A (via N-terminus). Interacts with NS4B. Interacts with unphosphorylated RNA-directed RNA polymerase NS5; this interaction stimulates RNA-directed RNA polymerase NS5 guanylyltransferase activity. NS3 interacts with host PDCD6IP; this interaction contributes to virion release. In terms of assembly, interacts with serine protease NS3. Homodimer. Interacts with host STAT2; this interaction prevents the establishment of cellular antiviral state. Interacts with serine protease NS3. Interacts with host TRIM23; this interaction leads to NS5 ubiquitination. In terms of processing, specific enzymatic cleavages in vivo yield mature proteins. The nascent capsid protein C contains a C-terminal hydrophobic domain that act as a signal sequence for translocation of prM into the lumen of the ER. Mature capsid protein C is cleaved at a site upstream of this hydrophobic domain by NS3. prM is cleaved in post-Golgi vesicles by a host furin, releasing the mature small envelope protein M, and peptide pr. Non-structural protein 2A-alpha, a C-terminally truncated form of non-structural protein 2A, results from partial cleavage by NS3. Specific enzymatic cleavages in vivo yield mature proteins peptide 2K acts as a signal sequence and is removed from the N-terminus of NS4B by the host signal peptidase in the ER lumen. Signal cleavage at the 2K-4B site requires a prior NS3 protease-mediated cleavage at the 4A-2K site. Cleaved in post-Golgi vesicles by a host furin, releasing the mature small envelope protein M, and peptide pr. This cleavage is incomplete as up to 30% of viral particles still carry uncleaved prM. Post-translationally, N-glycosylated. In terms of processing, N-glycosylated. The excreted form is glycosylated and this is required for efficient secretion of the protein from infected cells. Polyubiquitinated; ubiquitination is probably mediated by host TRIM23 and is prerequisite for NS5-STAT2 interaction. NS5 is not ISGylated or sumoylated. Post-translationally, acetylated by host KAT5. Acetylation modulates NS3 RNA-binding and unwinding activities and plays an important positive role for viral replication. In terms of processing, phosphorylated on serines residues. This phosphorylation may trigger NS5 nuclear localization.

The protein resides in the virion. Its subcellular location is the host nucleus. It is found in the host cytoplasm. It localises to the host perinuclear region. The protein localises to the secreted. The protein resides in the virion membrane. Its subcellular location is the host endoplasmic reticulum membrane. It catalyses the reaction Selective hydrolysis of -Xaa-Xaa-|-Yaa- bonds in which each of the Xaa can be either Arg or Lys and Yaa can be either Ser or Ala.. It carries out the reaction RNA(n) + a ribonucleoside 5'-triphosphate = RNA(n+1) + diphosphate. The catalysed reaction is a ribonucleoside 5'-triphosphate + H2O = a ribonucleoside 5'-diphosphate + phosphate + H(+). The enzyme catalyses ATP + H2O = ADP + phosphate + H(+). It catalyses the reaction a 5'-end (5'-triphosphoguanosine)-ribonucleoside in mRNA + S-adenosyl-L-methionine = a 5'-end (N(7)-methyl 5'-triphosphoguanosine)-ribonucleoside in mRNA + S-adenosyl-L-homocysteine. It carries out the reaction a 5'-end (N(7)-methyl 5'-triphosphoguanosine)-ribonucleoside in mRNA + S-adenosyl-L-methionine = a 5'-end (N(7)-methyl 5'-triphosphoguanosine)-(2'-O-methyl-ribonucleoside) in mRNA + S-adenosyl-L-homocysteine + H(+). Functionally, plays a role in virus budding by binding to the cell membrane and gathering the viral RNA into a nucleocapsid that forms the core of a mature virus particle. During virus entry, may induce genome penetration into the host cytoplasm after hemifusion induced by the surface proteins. Can migrate to the cell nucleus where it modulates host functions. Its function is as follows. Inhibits RNA silencing by interfering with host Dicer. Prevents premature fusion activity of envelope proteins in trans-Golgi by binding to envelope protein E at pH6.0. After virion release in extracellular space, gets dissociated from E dimers. In terms of biological role, acts as a chaperone for envelope protein E during intracellular virion assembly by masking and inactivating envelope protein E fusion peptide. prM is the only viral peptide matured by host furin in the trans-Golgi network probably to avoid catastrophic activation of the viral fusion activity in acidic Golgi compartment prior to virion release. prM-E cleavage is inefficient, and many virions are only partially matured. These uncleaved prM would play a role in immune evasion. Functionally, may play a role in virus budding. Exerts cytotoxic effects by activating a mitochondrial apoptotic pathway through M ectodomain. May display a viroporin activity. Its function is as follows. Binds to host cell surface receptor and mediates fusion between viral and cellular membranes. Envelope protein is synthesized in the endoplasmic reticulum in the form of heterodimer with protein prM. They play a role in virion budding in the ER, and the newly formed immature particle is covered with 60 spikes composed of heterodimer between precursor prM and envelope protein E. The virion is transported to the Golgi apparatus where the low pH causes dissociation of PrM-E heterodimers and formation of E homodimers. prM-E cleavage is inefficient, and many virions are only partially matured. These uncleaved prM would play a role in immune evasion. Involved in immune evasion, pathogenesis and viral replication. Once cleaved off the polyprotein, is targeted to three destinations: the viral replication cycle, the plasma membrane and the extracellular compartment. Essential for viral replication. Required for formation of the replication complex and recruitment of other non-structural proteins to the ER-derived membrane structures. Excreted as a hexameric lipoparticle that plays a role against host immune response. Antagonizing the complement function. Binds to the host macrophages and dendritic cells. Inhibits signal transduction originating from Toll-like receptor 3 (TLR3). In terms of biological role, component of the viral RNA replication complex that functions in virion assembly and antagonizes the host immune response. Functionally, required cofactor for the serine protease function of NS3. May have membrane-destabilizing activity and form viroporins. Its function is as follows. Displays three enzymatic activities: serine protease, NTPase and RNA helicase. NS3 serine protease, in association with NS2B, performs its autocleavage and cleaves the polyprotein at dibasic sites in the cytoplasm: C-prM, NS2A-NS2B, NS2B-NS3, NS3-NS4A, NS4A-2K and NS4B-NS5. NS3 RNA helicase binds RNA and unwinds dsRNA in the 3' to 5' direction. Also plays a role in virus assembly. Regulates the ATPase activity of the NS3 helicase activity. NS4A allows NS3 helicase to conserve energy during unwinding. In terms of biological role, functions as a signal peptide for NS4B and is required for the interferon antagonism activity of the latter. Functionally, induces the formation of ER-derived membrane vesicles where the viral replication takes place. Inhibits interferon (IFN)-induced host STAT1 phosphorylation and nuclear translocation, thereby preventing the establishment of cellular antiviral state by blocking the IFN-alpha/beta pathway. Its function is as follows. Replicates the viral (+) and (-) RNA genome, and performs the capping of genomes in the cytoplasm. NS5 methylates viral RNA cap at guanine N-7 and ribose 2'-O positions. Besides its role in RNA genome replication, also prevents the establishment of cellular antiviral state by blocking the interferon-alpha/beta (IFN-alpha/beta) signaling pathway. IFN-I induces binding of NS5 to host IFN-activated transcription factor STAT2, preventing its transcriptional activity. Host TRIM23 is the E3 ligase that interacts with and polyubiquitinates NS5 to promote its binding to STAT2 and trigger IFN-I signaling inhibition. The sequence is that of Genome polyprotein from Yellow fever virus (isolate Ivory Coast/1999) (YFV).